Here is a 523-residue protein sequence, read N- to C-terminus: Calcium and calcium/calmodulin-dependent serine/threonine-protein kinase DMI-3 (523 aa).

The 295-residue stretch at 12–306 folds into the Protein kinase domain; sequence YEVSEILGRG…ALELLSDPWV (295 aa). ATP is bound by residues 18–26 and K47; that span reads LGRGGFSVV. The active-site Proton acceptor is D171. T271 bears the Phosphothreonine mark. The interval 329–342 is calmodulin-binding; it reads ARRKLRAAAIASVW. EF-hand domains follow at residues 400–435, 436–471, and 478–513; these read SLIP…LKNS, KGED…LPYD, and TEPG…DSSL. Ca(2+) contacts are provided by D413, N415, D417, T419, E424, D449, D451, S453, C455, E460, D491, N493, D495, K497, and E502.

It belongs to the protein kinase superfamily. CAMK Ser/Thr protein kinase family. CaMK subfamily. Interacts with IPD3. In terms of processing, autophosphorylation. In terms of tissue distribution, highly expressed in roots. Expressed in root hairs and nodules. Expressed at low levels in flowers. Not detected in leaves or stems.

Its subcellular location is the nucleus. It catalyses the reaction L-seryl-[protein] + ATP = O-phospho-L-seryl-[protein] + ADP + H(+). It carries out the reaction L-threonyl-[protein] + ATP = O-phospho-L-threonyl-[protein] + ADP + H(+). With respect to regulation, activated by calcium. Autophosphorylation may play an important role in the regulation of the kinase activity. Functionally, during nodulation, plays a central role in bacterial infection and contributes to nodule organogenesis. Protein kinase that recognizes the calcium spiking induced by Nod factors and translates this signal to components controlling nodulation and mycorrhizal infection responses. May phosphorylate the NSP1 protein. Required in epidermal and cortical cells to promote infection thread (IT) formation in root hairs. The polypeptide is Calcium and calcium/calmodulin-dependent serine/threonine-protein kinase DMI-3 (Medicago truncatula (Barrel medic)).